The following is a 456-amino-acid chain: Taurine--pyruvate aminotransferase (456 aa).

Lys280 is modified (N6-(pyridoxal phosphate)lysine).

It belongs to the class-III pyridoxal-phosphate-dependent aminotransferase family. As to quaternary structure, homotetramer. Requires pyridoxal 5'-phosphate as cofactor.

It carries out the reaction taurine + pyruvate = sulfoacetaldehyde + L-alanine. It functions in the pathway organosulfur degradation; alkanesulfonate degradation. Involved in an anaerobic respiration pathway that converts the sulfonate taurine (2-aminoethanesulfonate) to ammonia, acetate and sulfide. Catalyzes the initial metabolic reaction of anaerobic taurine degradation, i.e. the transamination reaction between taurine and pyruvate leading to sulfoacetaldehyde and alanine. In Bilophila wadsworthia (strain 3_1_6), this protein is Taurine--pyruvate aminotransferase.